Here is a 612-residue protein sequence, read N- to C-terminus: Bifunctional 6(G)-fructosyltransferase/2,1-fructan:2,1-fructan 1-fructosyltransferase (612 aa).

Residues 1 to 24 (MDAQDIESRHPLIGARPRRRALRS) are Cytoplasmic-facing. The helical; Signal-anchor for type II membrane protein transmembrane segment at 25–45 (LSILLAAALLLGLVLFYANGT) threads the bilayer. Topologically, residues 46-612 (GSGTAVDPVR…NSTYNDFYHF (567 aa)) are vacuolar. Substrate-binding positions include 82-85 (YMND), glutamine 101, and tryptophan 109. Residue aspartate 85 is part of the active site. A glycan (N-linked (GlcNAc...) asparagine) is linked at asparagine 111. Residues 144-145 (WT) and 208-209 (RD) each bind substrate. N-linked (GlcNAc...) asparagine glycans are attached at residues asparagine 216 and asparagine 230. Residue glutamate 267 coordinates substrate. Residue asparagine 465 is glycosylated (N-linked (GlcNAc...) asparagine). A disulfide bridge links cysteine 466 with cysteine 514. Asparagine 586 and asparagine 603 each carry an N-linked (GlcNAc...) asparagine glycan.

Belongs to the glycosyl hydrolase 32 family. In terms of processing, might be processed in two N-terminal and C-terminal proteolytic fragments.

It localises to the vacuole membrane. The enzyme catalyses [1-beta-D-fructofuranosyl-(2-&gt;1)-]m+1 alpha-D-glucopyranoside + [1-beta-D-fructofuranosyl-(2-&gt;1)-]n+1 alpha-D-glucopyranoside = [1-beta-D-fructofuranosyl-(2-&gt;1)-]m alpha-D-glucopyranoside + [1-beta-D-fructofuranosyl-(2-&gt;1)-]n+1 beta-D-fructofuranosyl-(2-&gt;6)-alpha-D-glucopyranoside (m &gt; 0, n &gt;= 0).. The catalysed reaction is [beta-D-fructosyl-(2-&gt;1)-]m + [beta-D-fructosyl-(2-&gt;1)-]n = [beta-D-fructosyl-(2-&gt;1)-]m-1 + [beta-D-fructosyl-(2-&gt;1)-]n+1.. In terms of biological role, involved in the synthesis of fructan of the inulin neoseries. Catalyzes a self-transfer between identical oligosaccharides of the 1-kestose series. The protein is Bifunctional 6(G)-fructosyltransferase/2,1-fructan:2,1-fructan 1-fructosyltransferase of Allium cepa (Onion).